The sequence spans 357 residues: Glutamine synthetase cytosolic isozyme (357 aa).

Residues 20–100 (VIAEYIWIGG…VICDAYSPNG (81 aa)) form the GS beta-grasp domain. The GS catalytic domain occupies 107-357 (KRAAAAKIFN…IAETTILWKP (251 aa)).

The protein belongs to the glutamine synthetase family. Homooctamer.

The protein resides in the cytoplasm. It carries out the reaction L-glutamate + NH4(+) + ATP = L-glutamine + ADP + phosphate + H(+). This chain is Glutamine synthetase cytosolic isozyme, found in Pinus sylvestris (Scotch pine).